We begin with the raw amino-acid sequence, 534 residues long: Calmodulin calcium-dependent NAD kinase (534 aa).

The segment at 167–196 (QKVPKLKDFVMAATRKQRFERVTKDLKVKR) is calmodulin-binding. Residue 238-245 (GGMGAGKS) coordinates ATP.

In terms of assembly, interacts with calmodulin (CaM) in a calcium Ca(2+)-dependent manner in vitro. The cofactor is Ca(2+).

It is found in the mitochondrion outer membrane. It carries out the reaction NAD(+) + ATP = ADP + NADP(+) + H(+). In terms of biological role, phosphorylates NAD(+) to produce NADP(+) in a calmodulin calcium-dependent manner. Does not possess activity toward NADH. Has broad specificity for the phosphoryl donor, as ATP, CTP, GTP and UTP can be used interchangeably and produce similar efficiencies. May play a role in producing NADP(H) needed to regulate the elicitor-induced reactive oxygen species (ROS) burst by sustaining the activity of NADPH oxidases. Does not seem to play a role in photosynthesis-driven growth. This Arabidopsis thaliana (Mouse-ear cress) protein is Calmodulin calcium-dependent NAD kinase.